We begin with the raw amino-acid sequence, 488 residues long: Probable (S)-N-methylcoclaurine 3'-hydroxylase isozyme 2 (488 aa).

A helical membrane pass occupies residues 2–21; that stretch reads EVLSIAIVSFSFLLFLFFIL. Cysteine 427 is a binding site for heme.

The protein belongs to the cytochrome P450 family. Heme serves as cofactor. In terms of tissue distribution, expressed at low levels in roots.

The protein resides in the endoplasmic reticulum membrane. It localises to the microsome membrane. The enzyme catalyses (S)-N-methylcoclaurine + reduced [NADPH--hemoprotein reductase] + O2 = (S)-3'-hydroxy-N-methylcoclaurine + oxidized [NADPH--hemoprotein reductase] + H2O + H(+). The protein operates within alkaloid biosynthesis; (S)-reticuline biosynthesis; (S)-reticuline from (S)-norcoclaurine: step 3/4. 3'-hydroxylation of (S)-N-methylcoclaurine. The sequence is that of Probable (S)-N-methylcoclaurine 3'-hydroxylase isozyme 2 (CYP80B2) from Coptis japonica (Japanese goldthread).